An 89-amino-acid chain; its full sequence is Dynein light chain 1, cytoplasmic (89 aa).

Residue Lys36 is modified to N6-acetyllysine. A Glycyl lysine isopeptide (Lys-Gly) (interchain with G-Cter in SUMO2) cross-link involves residue Lys43. Residues 67–89 (THETKHFIYFYLGQVAILLFKSG) form an interaction with ESR1 region. Ser88 is modified (phosphoserine).

It belongs to the dynein light chain family. As to quaternary structure, homodimer. Monomer; the monomeric form is incapable of binding to target proteins. The cytoplasmic dynein 1 complex consists of two catalytic heavy chains (HCs) and a number of non-catalytic subunits presented by intermediate chains (ICs), light intermediate chains (LICs) and light chains (LCs); the composition seems to vary in respect to the IC, LIC and LC composition. The heavy chain homodimer serves as a scaffold for the probable homodimeric assembly of the respective non-catalytic subunits. The ICs and LICs bind directly to the HC dimer and the LCs assemble on the IC dimer. Interacts with TXNDC17. Interacts with WWC1 and ESR1. The WWC1-DYNLL1 interaction is mandatory for the recruitment and transactivation functions of ESR1 or DYNLL1 to the target chromatin. Interacts with BCL2L11. Interacts with BCL2; the interaction is greatly enhanced in the nucleus and in mitochondria upon induction of apoptosis. Interacts with PAK1; the interaction requires dimeric DYNLL1. Interacts with MYZAP. Part of an astrin (SPAG5)-kinastrin (SKAP) complex containing KNSTRN, SPAG5, PLK1, DYNLL1 and SGO2. Interacts with ATMIN; this interaction inhibits ATMIN transcriptional activity and hence may play a role in a feedback loop whereby DYNLL1 inhibits transactivation of its own promoter by ATMIN. Interacts with NEK9 (not phosphorylated at 'Ser-944'). Interacts with BICD2. Interacts with BCAS1. Interacts with Basson/BSN. Interacts with HDAC6. Interacts with TPPP. Interacts with AMBRA1 (via TQT motifs); tethering AMBRA1 to the cytoskeleton. Interacts with FAM83D/CHICA (via C-terminus). Interacts with HMMR, SPAG5/Astrin and KNSTRN/Kinastrin. Interacts with TLK2. Interacts with NOS1. Interacts with WWC1, WWC2 and WWC3. Interacts with MRE11; inhibiting MRE11 homodimerization and activity. In terms of assembly, (Microbial infection) Interacts with bovine immunodeficiency virus Gag protein; this interaction is critical for intracellular microtubule-dependent viral genome transport. Post-translationally, phosphorylation at Ser-88 promotes recruitment to DNA double-strand breaks (DSBs) by TP53BP1 and ability to inhibit MRE11.

The protein resides in the cytoplasm. It localises to the cytoskeleton. Its subcellular location is the microtubule organizing center. It is found in the centrosome. The protein localises to the chromosome. The protein resides in the nucleus. It localises to the mitochondrion. Acts as one of several non-catalytic accessory components of the cytoplasmic dynein 1 complex that are thought to be involved in linking dynein to cargos and to adapter proteins that regulate dynein function. Cytoplasmic dynein 1 acts as a motor for the intracellular retrograde motility of vesicles and organelles along microtubules. May play a role in changing or maintaining the spatial distribution of cytoskeletal structures. In addition to its role in cytoskeleton and transport, acts as a protein-protein adapter, which inhibits and/or sequesters target proteins. Involved in the response to DNA damage by acting as a key regulator of DNA end resection: when phosphorylated at Ser-88, recruited to DNA double-strand breaks (DSBs) by TP53BP1 and acts by disrupting MRE11 dimerization, thereby inhibiting DNA end resection. In a subset of DSBs, DYNLL1 remains unphosphorylated and promotes the recruitment of the Shieldin complex. Binds and inhibits the catalytic activity of neuronal nitric oxide synthase/NOS1. Promotes transactivation functions of ESR1 and plays a role in the nuclear localization of ESR1. Regulates apoptotic activities of BCL2L11 by sequestering it to microtubules. Upon apoptotic stimuli the BCL2L11-DYNLL1 complex dissociates from cytoplasmic dynein and translocates to mitochondria and sequesters BCL2 thus neutralizing its antiapoptotic activity. In Bos taurus (Bovine), this protein is Dynein light chain 1, cytoplasmic (DYNLL1).